Here is a 1083-residue protein sequence, read N- to C-terminus: Histone-lysine N-methyltransferase ATX2 (1083 aa).

The Nuclear localization signal signature appears at 77–84; the sequence is HRRPEIVH. The region spanning 315 to 379 is the PWWP domain; sequence PRDIIWAKLT…VKQAVSFLKG (65 aa). Positions 422 to 443 are disordered; it reads TDCSERINSGEEDSSNSGDDYT. In terms of domain architecture, FYR N-terminal spans 457–516; that stretch reads DCLHRIGDLQIINLGRIVTDSEFFKDSKHTWPEGYTATRKFISLKDPNASAMYKMEVLRD. One can recognise an FYR C-terminal domain in the interval 520–604; it reads KTRPVFRVTT…PPSKVSQRKY (85 aa). A PHD-type 1 zinc finger spans residues 626 to 677; the sequence is LDKCNVCHMDEEYENNLFLQCDKCRMMVHTRCYGQLEPHNGILWLCNLCRPV. The segment at 682-715 adopts a C2HC pre-PHD-type zinc-finger fold; the sequence is PPRCCLCPVVGGAMKPTTDGRWAHLACAIWIPET. Residues 682–807 are extended PHD domain (ePHD); it reads PPRCCLCPVV…RLLSFCKRHR (126 aa). The PHD-type 2 zinc-finger motif lies at 739-807; that stretch reads LLCSICGVSY…RLLSFCKRHR (69 aa). In terms of domain architecture, SET spans 919–1037; it reads KRLAFGKSGI…KWEELTYDYR (119 aa). His929 contacts S-adenosyl-L-methionine. The O-linked (GlcNAc) serine glycan is linked to Ser968. S-adenosyl-L-methionine is bound by residues Tyr975 and 998–999; that span reads NH. Position 1001 (Cys1001) interacts with Zn(2+). Residue Tyr1036 participates in S-adenosyl-L-methionine binding. Residues 1043–1059 form the Post-SET domain; sequence ERLACYCGFPRCRGVVN. Residues Cys1047, Cys1049, and Cys1054 each contribute to the Zn(2+) site.

This sequence belongs to the class V-like SAM-binding methyltransferase superfamily. Histone-lysine methyltransferase family. TRX/MLL subfamily. Activated via O-glycosylation. Expressed in roots, leaves and flowers and, to a lower extent, in young seedlings.

It is found in the nucleus. The enzyme catalyses N(6)-methyl-L-lysyl-[histone] + S-adenosyl-L-methionine = N(6),N(6)-dimethyl-L-lysyl-[histone] + S-adenosyl-L-homocysteine + H(+). In terms of biological role, histone methyltransferase. Dimethylates 'Lys-4' of histone H3 (H3K4me2). H3 'Lys-4' methylation represents a specific tag for epigenetic transcriptional activation. Methylates only a limited fraction of nucleosomes of target genes (e.g. NAP and XTH33). Involved in epigenetic regulation of the floral repressor FLC and FT to prevent the transition from vegetative to reproductive development. The protein is Histone-lysine N-methyltransferase ATX2 of Arabidopsis thaliana (Mouse-ear cress).